The sequence spans 314 residues: Coproporphyrin III ferrochelatase (314 aa).

The Fe(2+) site is built by His186 and Glu268.

The protein belongs to the ferrochelatase family.

Its subcellular location is the cytoplasm. It carries out the reaction Fe-coproporphyrin III + 2 H(+) = coproporphyrin III + Fe(2+). The protein operates within porphyrin-containing compound metabolism; protoheme biosynthesis. Functionally, involved in coproporphyrin-dependent heme b biosynthesis. Catalyzes the insertion of ferrous iron into coproporphyrin III to form Fe-coproporphyrin III. The chain is Coproporphyrin III ferrochelatase from Lactococcus lactis subsp. lactis (strain IL1403) (Streptococcus lactis).